The following is a 210-amino-acid chain: MNSLIMVIIALIAAYFIGSTPAPYLAGRIFKGIDIRTVGSKNMGSMNVFYNVGFWPGILVLAVDIGKGALAMAVANWLGEGLGIQMLCALMAIAGHNYPVWLKFKGGKGGATAIGILAYLMPEGIPIYIACFLVLMAITRFPTLSYGISFLSFILVAWLGQHDLGKVLFSLLVVMIPIIMYIPRMKEIKNKAGSGNAKRAIFRKNLKERL.

Helical transmembrane passes span 4 to 24 (LIMV…PAPY), 54 to 74 (FWPG…AMAV), 82 to 102 (LGIQ…PVWL), 114 to 134 (IGIL…CFLV), 141 to 161 (FPTL…WLGQ), and 163 to 183 (DLGK…MYIP).

Belongs to the PlsY family. Probably interacts with PlsX.

It localises to the cell membrane. It carries out the reaction an acyl phosphate + sn-glycerol 3-phosphate = a 1-acyl-sn-glycero-3-phosphate + phosphate. It functions in the pathway lipid metabolism; phospholipid metabolism. Its function is as follows. Catalyzes the transfer of an acyl group from acyl-phosphate (acyl-PO(4)) to glycerol-3-phosphate (G3P) to form lysophosphatidic acid (LPA). This enzyme utilizes acyl-phosphate as fatty acyl donor, but not acyl-CoA or acyl-ACP. The protein is Glycerol-3-phosphate acyltransferase 2 of Dehalococcoides mccartyi (strain ATCC BAA-2266 / KCTC 15142 / 195) (Dehalococcoides ethenogenes (strain 195)).